The primary structure comprises 217 residues: N-(5'-phosphoribosyl)anthranilate isomerase (217 aa).

The protein belongs to the TrpF family.

It carries out the reaction N-(5-phospho-beta-D-ribosyl)anthranilate = 1-(2-carboxyphenylamino)-1-deoxy-D-ribulose 5-phosphate. It participates in amino-acid biosynthesis; L-tryptophan biosynthesis; L-tryptophan from chorismate: step 3/5. The sequence is that of N-(5'-phosphoribosyl)anthranilate isomerase from Chlorobium luteolum (strain DSM 273 / BCRC 81028 / 2530) (Pelodictyon luteolum).